Consider the following 183-residue polypeptide: Gamma-crystallin N (183 aa).

4 consecutive Beta/gamma crystallin 'Greek key' domains span residues 6–46 (GKII…RVET), 47–89 (GAWI…KPVR), 95–136 (YRLE…KVYG), and 138–180 (GAWV…RRVV).

This sequence belongs to the beta/gamma-crystallin family. In terms of assembly, monomer.

Functionally, crystallins are the dominant structural components of the vertebrate eye lens. The protein is Gamma-crystallin N (crygn) of Xenopus tropicalis (Western clawed frog).